Here is a 409-residue protein sequence, read N- to C-terminus: Sulfide-quinone reductase (409 aa).

FAD contacts are provided by residues 8 to 12 (GGRFG), 34 to 35 (NK), and cysteine 129. Cysteine 178 functions as the Cysteine persulfide intermediate in the catalytic mechanism. Asparagine 271, aspartate 307, and glycine 317 together coordinate FAD. The active-site Cysteine persulfide intermediate is the cysteine 350.

The protein belongs to the SQRD family. Monomer. FAD serves as cofactor.

It localises to the membrane. It carries out the reaction n a quinone + n hydrogen sulfide + n H(+) = polysulfur(n-2) + n a quinol. Inhibited by the quinone analog 2-heptyl-4-hydroxyquinolone N-oxide (HQNO). Inactivated by iodoacetamide treatment. Inhibited by KCN. Catalyzes the oxidation of sulfides, such as hydrogen sulfide, with the help of a quinone. Has the highest activity with caldariella quinone and decylubiquinone, and lower activity with naphtoquinones. Consecutive reaction cycles lead to the accumulation of a polysulfide product on the active site Cys residues; these products are released when they exceed a critical length, typically as cyclooctasulfur. This is Sulfide-quinone reductase from Acidianus ambivalens (Desulfurolobus ambivalens).